The following is a 148-amino-acid chain: Receptor activity-modifying protein 1 (148 aa).

An N-terminal signal peptide occupies residues 1–26 (MARGLRGLPRRGLWLLLVNHLFLATA). Intrachain disulfides connect cysteine 27–cysteine 82, cysteine 40–cysteine 72, and cysteine 57–cysteine 104. The Extracellular segment spans residues 27–118 (CQDTDHAALL…RALQDPPSSV (92 aa)). The chain crosses the membrane as a helical span at residues 119 to 140 (LCPFIVVPILATLLMTALVVWR). Topologically, residues 141–148 (SKRPEGIV) are cytoplasmic.

It belongs to the RAMP family. As to quaternary structure, heterodimer of CALCRL and RAMP1; the interaction induces allosteric modulation of CALCRL function and CGRP1/CALCA and CGRP2/CALCB ligand specificity. Heterodimer of CALCR and RAMP1; interaction forms the AMYR1 receptor complex for amylin/IAPP and CGRP1/CALCA ligands.

It is found in the cell membrane. In terms of biological role, accessory protein that interacts with and modulates the function of G-protein coupled receptors including calcitonin gene-related peptide type 1 receptor (CALCRL) and calcitonin receptor (CALCR). Required for the transport of CALCRL to the plasma membrane. Together with CALCRL, form the receptor complex for the calcitonin gene-related peptides CGRP1/CALCA and CGRP2/CALCB. Together with CALCR, form the AMYR1 receptor complex for amylin/IAPP and CGRP1/CALCA. This is Receptor activity-modifying protein 1 (RAMP1) from Sus scrofa (Pig).